Consider the following 227-residue polypeptide: Phosphoribosylformylglycinamidine synthase subunit PurQ (227 aa).

A Glutamine amidotransferase type-1 domain is found at 2 to 226 (KFAVIQFPGS…VKAWKEEQVN (225 aa)). The active-site Nucleophile is cysteine 86. Residues histidine 195 and glutamate 197 contribute to the active site.

In terms of assembly, part of the FGAM synthase complex composed of 1 PurL, 1 PurQ and 2 PurS subunits.

It is found in the cytoplasm. The enzyme catalyses N(2)-formyl-N(1)-(5-phospho-beta-D-ribosyl)glycinamide + L-glutamine + ATP + H2O = 2-formamido-N(1)-(5-O-phospho-beta-D-ribosyl)acetamidine + L-glutamate + ADP + phosphate + H(+). It carries out the reaction L-glutamine + H2O = L-glutamate + NH4(+). Its pathway is purine metabolism; IMP biosynthesis via de novo pathway; 5-amino-1-(5-phospho-D-ribosyl)imidazole from N(2)-formyl-N(1)-(5-phospho-D-ribosyl)glycinamide: step 1/2. In terms of biological role, part of the phosphoribosylformylglycinamidine synthase complex involved in the purines biosynthetic pathway. Catalyzes the ATP-dependent conversion of formylglycinamide ribonucleotide (FGAR) and glutamine to yield formylglycinamidine ribonucleotide (FGAM) and glutamate. The FGAM synthase complex is composed of three subunits. PurQ produces an ammonia molecule by converting glutamine to glutamate. PurL transfers the ammonia molecule to FGAR to form FGAM in an ATP-dependent manner. PurS interacts with PurQ and PurL and is thought to assist in the transfer of the ammonia molecule from PurQ to PurL. The sequence is that of Phosphoribosylformylglycinamidine synthase subunit PurQ from Listeria monocytogenes serovar 1/2a (strain ATCC BAA-679 / EGD-e).